We begin with the raw amino-acid sequence, 377 residues long: Succinyl-diaminopimelate desuccinylase (377 aa).

His68 contributes to the Zn(2+) binding site. Asp70 is an active-site residue. Asp101 is a Zn(2+) binding site. Glu135 functions as the Proton acceptor in the catalytic mechanism. Positions 136, 164, and 350 each coordinate Zn(2+).

Belongs to the peptidase M20A family. DapE subfamily. As to quaternary structure, homodimer. Zn(2+) is required as a cofactor. The cofactor is Co(2+).

It carries out the reaction N-succinyl-(2S,6S)-2,6-diaminopimelate + H2O = (2S,6S)-2,6-diaminopimelate + succinate. The protein operates within amino-acid biosynthesis; L-lysine biosynthesis via DAP pathway; LL-2,6-diaminopimelate from (S)-tetrahydrodipicolinate (succinylase route): step 3/3. Functionally, catalyzes the hydrolysis of N-succinyl-L,L-diaminopimelic acid (SDAP), forming succinate and LL-2,6-diaminopimelate (DAP), an intermediate involved in the bacterial biosynthesis of lysine and meso-diaminopimelic acid, an essential component of bacterial cell walls. In Vibrio vulnificus (strain CMCP6), this protein is Succinyl-diaminopimelate desuccinylase.